Reading from the N-terminus, the 1466-residue chain is ABC transporter G family member 40 (1466 aa).

The segment at Met-1–Gly-21 is disordered. Residues Gly-176–Gln-449 enclose the ABC transporter 1 domain. Residue Gly-209–Ser-216 coordinates ATP. Positions Glu-527–Phe-740 constitute an ABC transmembrane type-2 1 domain. Transmembrane regions (helical) follow at residues Phe-545–Phe-565, Phe-581–Asn-601, Val-633–Phe-653, Phe-664–Ile-684, Ile-690–Ile-710, and Phe-776–Leu-796. Residues Tyr-821–Ser-831 are compositionally biased toward basic and acidic residues. Residues Tyr-821 to Pro-851 form a disordered region. Residues Thr-833–Ser-843 are compositionally biased toward low complexity. The 253-residue stretch at Leu-865–Leu-1117 folds into the ABC transporter 2 domain. Gly-910–Thr-917 provides a ligand contact to ATP. An ABC transmembrane type-2 2 domain is found at Ile-1190–Phe-1404. The next 7 membrane-spanning stretches (helical) occupy residues Tyr-1209–Trp-1229, Leu-1241–Met-1261, Phe-1297–Tyr-1317, Phe-1327–Ala-1347, Ala-1355–Phe-1375, Ile-1396–Gly-1416, and Phe-1435–Gly-1455.

Belongs to the ABC transporter superfamily. ABCG family. PDR (TC 3.A.1.205) subfamily.

Its subcellular location is the membrane. In Oryza sativa subsp. japonica (Rice), this protein is ABC transporter G family member 40.